Consider the following 151-residue polypeptide: Regulatory protein RecX (151 aa).

Belongs to the RecX family.

The protein resides in the cytoplasm. Modulates RecA activity. The chain is Regulatory protein RecX from Chlorobium phaeobacteroides (strain BS1).